The following is a 337-amino-acid chain: Biotin synthase (337 aa).

One can recognise a Radical SAM core domain in the interval 52–281 (ADIQRASLLS…RSRVRLSAGR (230 aa)). Residues C67, C71, and C74 each coordinate [4Fe-4S] cluster. Residues C112, C144, C204, and R276 each coordinate [2Fe-2S] cluster.

It belongs to the radical SAM superfamily. Biotin synthase family. Homodimer. [4Fe-4S] cluster serves as cofactor. It depends on [2Fe-2S] cluster as a cofactor.

The enzyme catalyses (4R,5S)-dethiobiotin + (sulfur carrier)-SH + 2 reduced [2Fe-2S]-[ferredoxin] + 2 S-adenosyl-L-methionine = (sulfur carrier)-H + biotin + 2 5'-deoxyadenosine + 2 L-methionine + 2 oxidized [2Fe-2S]-[ferredoxin]. It functions in the pathway cofactor biosynthesis; biotin biosynthesis; biotin from 7,8-diaminononanoate: step 2/2. Functionally, catalyzes the conversion of dethiobiotin (DTB) to biotin by the insertion of a sulfur atom into dethiobiotin via a radical-based mechanism. The protein is Biotin synthase of Methylobacterium radiotolerans (strain ATCC 27329 / DSM 1819 / JCM 2831 / NBRC 15690 / NCIMB 10815 / 0-1).